The following is a 963-amino-acid chain: SH3 domain-binding protein 4 (963 aa).

Positions 55–114 (GNAKEVIAIKDYCPTNFTTLKFSKGDHLYVLDTSGGEWWYAHNTTEMGYIPSSYVQPLNY) constitute an SH3 1 domain. Residues Ser131, Ser246, Ser251, Ser279, and Ser296 each carry the phosphoserine modification. One can recognise a ZU5 domain in the interval 317–454 (TNIVCKLDSS…LEPCMYVAVV (138 aa)). Phosphoserine is present on Ser637. In terms of domain architecture, SH3 2 spans 654 to 724 (SSLKFGKLLK…HTKNVLVVGR (71 aa)).

Homodimer or homooligomer. Interacts with DNM2, EPS15, clathrin, the adapter protein complex 2/AP-2 and TFRC. Interacts with the Rag GTPases RRAGA, RRAGB, RRAGC and RRAGD; the interaction is most probably direct, preferentially occurs with their inactive GDP-bound form and is negatively regulated by amino acids. As to quaternary structure, (Microbial infection) Interacts with molluscum contagiosum virus protein MC159L; this interaction is important for the suppression of autophagy. In terms of processing, phosphorylated upon EGF stimulation. Phosphorylation prevents interaction with DNM2. As to expression, expressed in all tissues tested with higher expression in pancreas. Expressed by retinal pigment epithelial cells (at protein level).

The protein resides in the membrane. Its subcellular location is the clathrin-coated pit. The protein localises to the cytoplasmic vesicle. It localises to the clathrin-coated vesicle. It is found in the nucleus. In terms of biological role, may function in transferrin receptor internalization at the plasma membrane through a cargo-specific control of clathrin-mediated endocytosis. Alternatively, may act as a negative regulator of the amino acid-induced TOR signaling by inhibiting the formation of active Rag GTPase complexes. Preferentially binds inactive Rag GTPase complexes and prevents their interaction with the mTORC1 complex inhibiting its relocalization to lysosomes and its activation. Thereby, may indirectly regulate cell growth, proliferation and autophagy. This is SH3 domain-binding protein 4 (SH3BP4) from Homo sapiens (Human).